The chain runs to 568 residues: DNA ligase 2 (568 aa).

E254 contacts ATP. K256 serves as the catalytic N6-AMP-lysine intermediate. Residues R261, R276, E306, F346, R425, and K431 each coordinate ATP.

This sequence belongs to the ATP-dependent DNA ligase family. Mg(2+) serves as cofactor.

It carries out the reaction ATP + (deoxyribonucleotide)n-3'-hydroxyl + 5'-phospho-(deoxyribonucleotide)m = (deoxyribonucleotide)n+m + AMP + diphosphate.. Its function is as follows. DNA ligase that seals nicks in double-stranded DNA during DNA replication, DNA recombination and DNA repair. This is DNA ligase 2 from Methanosarcina mazei (strain ATCC BAA-159 / DSM 3647 / Goe1 / Go1 / JCM 11833 / OCM 88) (Methanosarcina frisia).